The following is a 163-amino-acid chain: ATP synthase subunit b (163 aa).

The helical transmembrane segment at 9-29 (GLLIAQLINVVFVVWLLTTFL) threads the bilayer.

The protein belongs to the ATPase B chain family. In terms of assembly, F-type ATPases have 2 components, F(1) - the catalytic core - and F(0) - the membrane proton channel. F(1) has five subunits: alpha(3), beta(3), gamma(1), delta(1), epsilon(1). F(0) has four main subunits: a(1), b(2) and c(10-14). The alpha and beta chains form an alternating ring which encloses part of the gamma chain. F(1) is attached to F(0) by a central stalk formed by the gamma and epsilon chains, while a peripheral stalk is formed by the delta and b chains.

The protein localises to the cell membrane. Its function is as follows. F(1)F(0) ATP synthase produces ATP from ADP in the presence of a proton or sodium gradient. F-type ATPases consist of two structural domains, F(1) containing the extramembraneous catalytic core and F(0) containing the membrane proton channel, linked together by a central stalk and a peripheral stalk. During catalysis, ATP synthesis in the catalytic domain of F(1) is coupled via a rotary mechanism of the central stalk subunits to proton translocation. In terms of biological role, component of the F(0) channel, it forms part of the peripheral stalk, linking F(1) to F(0). This Roseiflexus castenholzii (strain DSM 13941 / HLO8) protein is ATP synthase subunit b.